The following is a 1141-amino-acid chain: MARYTQRPENALKRANEFIEVGKPLRALDTLQEVFRNKRWNYAYSETVIEPLMFKYLYLCVELKKSHIAKEGLFQYRNMFQLVNVNSLENVIRGYLKMAEEHTEAAQAQSSAAVAVLELDDLDNIATPESILMSAVCGEDAQDRSDRTILLPWVKFLWESYCQCLELLRVNTHCEALYHDIARMAFQFCLKYNRKSEFRRLCDKLRKHLEDICKSSNQTTGVSINKVETQQLCLDTRLYLLDSAIQMELWQEAYKAIEDIHGLMALSKKTPVPKTMANYYQKLAMVFSKAGNQLFHAAALLKLFQLTRELKKNLTKDDLQRMAAHVLLATLSIPLPSAHPEFDRFIEADKSPLEKAQKLAVLLGLPQPPTRVSLIREVVRLNVPQLVSEDFRNLYNWLEVDFNPLNLCKRIQSIVDFIENGPENALLTPYIQSLKDVTIMRLIRQISQVYESIKFQRLLQLASFCNIFELEKLLVESVRHNDMQIRIDHQKNSIYFGTDLTESQREYRPDGPALQSMPSEQIRSQLVNMSTVLTRAVSIVYPNRERDQRAKLRNQMVSQYHEIKDREHQRILQRQKIIEDRKEYIEKQNNAREEEEARRQEEESRKAKLAEQKRLEQEQEERERKRHQNEIQAIREKSLKEKVQQISQTAHGKKMLSKLDEEGIKKLDAEQIAKRESEELQREAKELQSKLKSQEKKIDYFERAKRLEEIPLFEKYLAEKQVKDKEFWEATEKTRIENAIAERKDAVAQQERLKRMYPDRDEFLEALKKERASLYVEKLKKFEAALEAERKKRLADRIVRRREERRQAFLREKEEERLRKEEEIRLAQAAEERAAAEARRLEREAEDEKRRAQYEKQRAKEEEAERKIKEDRDRLSRELASERERTEKERDTWRPRGGDRPSASAGGSSEWRRAAPAVSERNDRGGERIERGGDRVERGGERIERGGERIERGGDRDRKDNEGADSSWRVRREPDTQRAAAPKDSGAPQSRDDKWRRGGERDRDFRNDGARRDRDDGPRRDRDDGPRRDRDDERGGFRRNDGPRRTDEPQRETGGNWRDAPRHADRENRRPAGERRDRDVRETRGDQRGSAPKEAASGGGGGNWRNAPATREEKPAAKRDQAQEKENKAGDDGEWTSVKRR.

In terms of domain architecture, PCI spans 319 to 501 (LQRMAAHVLL…NSIYFGTDLT (183 aa)). 2 stretches are compositionally biased toward basic and acidic residues: residues 588–623 (QNNAREEEEARRQEEESRKAKLAEQKRLEQEQEERE) and 829–899 (AAEE…RGGD). Disordered stretches follow at residues 588–631 (QNNA…QNEI) and 829–1141 (AAEE…VKRR). S908 is subject to Phosphoserine. Composition is skewed to basic and acidic residues over residues 920–976 (ERND…EPDT), 990–1051 (SRDD…EPQR), 1059–1087 (DAPRHADRENRRPAGERRDRDVRETRGDQ), and 1110–1131 (TREEKPAAKRDQAQEKENKAGD).

This sequence belongs to the eIF-3 subunit A family. As to quaternary structure, component of the eukaryotic translation initiation factor 3 (eIF-3) complex. The eIF-3 complex interacts with pix.

Its subcellular location is the cytoplasm. Functionally, RNA-binding component of the eukaryotic translation initiation factor 3 (eIF-3) complex, which is involved in protein synthesis of a specialized repertoire of mRNAs and, together with other initiation factors, stimulates binding of mRNA and methionyl-tRNAi to the 40S ribosome. The eIF-3 complex specifically targets and initiates translation of a subset of mRNAs involved in cell proliferation. This Drosophila simulans (Fruit fly) protein is Eukaryotic translation initiation factor 3 subunit A.